Reading from the N-terminus, the 557-residue chain is Dihydroxy-acid dehydratase (557 aa).

Position 78 (Asp-78) interacts with Mg(2+). Cys-119 is a binding site for [2Fe-2S] cluster. Residues Asp-120 and Lys-121 each contribute to the Mg(2+) site. Residue Lys-121 is modified to N6-carboxylysine. A [2Fe-2S] cluster-binding site is contributed by Cys-192. Glu-442 serves as a coordination point for Mg(2+). The active-site Proton acceptor is the Ser-468.

It belongs to the IlvD/Edd family. Homodimer. [2Fe-2S] cluster serves as cofactor. It depends on Mg(2+) as a cofactor.

The enzyme catalyses (2R)-2,3-dihydroxy-3-methylbutanoate = 3-methyl-2-oxobutanoate + H2O. It carries out the reaction (2R,3R)-2,3-dihydroxy-3-methylpentanoate = (S)-3-methyl-2-oxopentanoate + H2O. The protein operates within amino-acid biosynthesis; L-isoleucine biosynthesis; L-isoleucine from 2-oxobutanoate: step 3/4. It participates in amino-acid biosynthesis; L-valine biosynthesis; L-valine from pyruvate: step 3/4. Its function is as follows. Functions in the biosynthesis of branched-chain amino acids. Catalyzes the dehydration of (2R,3R)-2,3-dihydroxy-3-methylpentanoate (2,3-dihydroxy-3-methylvalerate) into 2-oxo-3-methylpentanoate (2-oxo-3-methylvalerate) and of (2R)-2,3-dihydroxy-3-methylbutanoate (2,3-dihydroxyisovalerate) into 2-oxo-3-methylbutanoate (2-oxoisovalerate), the penultimate precursor to L-isoleucine and L-valine, respectively. This chain is Dihydroxy-acid dehydratase, found in Bacillus cereus (strain AH187).